The following is a 137-amino-acid chain: Bacteriohemerythrin (137 aa).

Residues H21, H53, E57, H72, H76, H112, and D117 each coordinate Fe cation.

It belongs to the hemerythrin family. As to quaternary structure, monomer.

Its function is as follows. Oxygen-binding protein. May be involved in a storage mechanism or for delivery to oxygen-requiring enzymes. The oxygen-binding site contains two iron atoms. The polypeptide is Bacteriohemerythrin (Ralstonia nicotianae (strain ATCC BAA-1114 / GMI1000) (Ralstonia solanacearum)).